A 273-amino-acid polypeptide reads, in one-letter code: Large ribosomal subunit protein uL2 (273 aa).

Disordered stretches follow at residues 31–50 (APLLDSKSKTGGRNNLGRIT) and 221–273 (RGTA…RRGK). Residues 253–273 (KGKKTRHNKRTDKYIVRRRGK) show a composition bias toward basic residues.

Belongs to the universal ribosomal protein uL2 family. Part of the 50S ribosomal subunit. Forms a bridge to the 30S subunit in the 70S ribosome.

In terms of biological role, one of the primary rRNA binding proteins. Required for association of the 30S and 50S subunits to form the 70S ribosome, for tRNA binding and peptide bond formation. It has been suggested to have peptidyltransferase activity; this is somewhat controversial. Makes several contacts with the 16S rRNA in the 70S ribosome. In Actinobacillus pleuropneumoniae serotype 7 (strain AP76), this protein is Large ribosomal subunit protein uL2.